The sequence spans 431 residues: Reticulon-like protein B17 (431 aa).

Disordered stretches follow at residues 1–110 (MEST…SEAV) and 126–152 (PPRKRKTNGRPKKDKQSSAPPLCSSSD). A compositionally biased stretch (polar residues) spans 12–26 (TKSASRLQDSSNPPN). A compositionally biased stretch (basic residues) spans 126–138 (PPRKRKTNGRPKK). The span at 142–152 (SSAPPLCSSSD) shows a compositional bias: polar residues. The Reticulon domain occupies 168-355 (ISDLVMWRDV…VTAFWNLTSI (188 aa)). The next 4 membrane-spanning stretches (helical) occupy residues 177–197 (VAKSTLWFGFGCLSFLSSCFA), 202–222 (FSVFSAVSNLGLVLLCGSFLS), 286–306 (YGHLITLWRLSAFGFFLSFTI), and 349–369 (FWNLTSIRTRIFAVFIILVIF). Acidic residues predominate over residues 382 to 415 (EVEPVENEQEEETLPQEEETVPQEEETVPQEEEQ). The segment at 382–422 (EVEPVENEQEEETLPQEEETVPQEEETVPQEEEQTQPSEER) is disordered.

It localises to the endoplasmic reticulum membrane. This is Reticulon-like protein B17 (RTNLB17) from Arabidopsis thaliana (Mouse-ear cress).